A 132-amino-acid chain; its full sequence is Small ribosomal subunit protein uS8 (132 aa).

This sequence belongs to the universal ribosomal protein uS8 family. In terms of assembly, part of the 30S ribosomal subunit. Contacts proteins S5 and S12.

One of the primary rRNA binding proteins, it binds directly to 16S rRNA central domain where it helps coordinate assembly of the platform of the 30S subunit. This is Small ribosomal subunit protein uS8 from Paramagnetospirillum magneticum (strain ATCC 700264 / AMB-1) (Magnetospirillum magneticum).